We begin with the raw amino-acid sequence, 476 residues long: DnaJ homolog subfamily C member 7 homolog (476 aa).

The segment at 1–22 is disordered; the sequence is MTEVETTHMNAGTESQQEPAEL. Residues 7–18 are compositionally biased toward polar residues; it reads THMNAGTESQQE. TPR repeat units lie at residues 23–56, 59–92, 143–176, 177–210, 223–256, 261–294, and 295–328; these read AEKQ…GSDS, AIYY…KPDV, MSWM…NPKN, VEAL…DPDC, LENT…DPDN, AKLY…DSSY, and LKGL…DASD. Positions 349–414 constitute a J domain; the sequence is DHYKILGVSK…ESRRRFDSGV (66 aa).

Its subcellular location is the cytoplasm. The protein is DnaJ homolog subfamily C member 7 homolog of Schizosaccharomyces pombe (strain 972 / ATCC 24843) (Fission yeast).